The chain runs to 740 residues: Phosphoribosylformylglycinamidine synthase subunit PurL (740 aa).

Histidine 54 is a catalytic residue. ATP contacts are provided by tyrosine 57 and lysine 96. A Mg(2+)-binding site is contributed by glutamate 98. Substrate is bound by residues 99–102 (SHNH) and arginine 121. Histidine 100 acts as the Proton acceptor in catalysis. Aspartate 122 is a Mg(2+) binding site. Position 245 (glutamine 245) interacts with substrate. Aspartate 273 is a binding site for Mg(2+). Residue 317-319 (ESQ) participates in substrate binding. ATP-binding residues include aspartate 499 and glycine 536. Position 537 (asparagine 537) interacts with Mg(2+). Serine 539 is a binding site for substrate.

The protein belongs to the FGAMS family. As to quaternary structure, monomer. Part of the FGAM synthase complex composed of 1 PurL, 1 PurQ and 2 PurS subunits.

It localises to the cytoplasm. It carries out the reaction N(2)-formyl-N(1)-(5-phospho-beta-D-ribosyl)glycinamide + L-glutamine + ATP + H2O = 2-formamido-N(1)-(5-O-phospho-beta-D-ribosyl)acetamidine + L-glutamate + ADP + phosphate + H(+). It functions in the pathway purine metabolism; IMP biosynthesis via de novo pathway; 5-amino-1-(5-phospho-D-ribosyl)imidazole from N(2)-formyl-N(1)-(5-phospho-D-ribosyl)glycinamide: step 1/2. Its function is as follows. Part of the phosphoribosylformylglycinamidine synthase complex involved in the purines biosynthetic pathway. Catalyzes the ATP-dependent conversion of formylglycinamide ribonucleotide (FGAR) and glutamine to yield formylglycinamidine ribonucleotide (FGAM) and glutamate. The FGAM synthase complex is composed of three subunits. PurQ produces an ammonia molecule by converting glutamine to glutamate. PurL transfers the ammonia molecule to FGAR to form FGAM in an ATP-dependent manner. PurS interacts with PurQ and PurL and is thought to assist in the transfer of the ammonia molecule from PurQ to PurL. In Anoxybacillus flavithermus (strain DSM 21510 / WK1), this protein is Phosphoribosylformylglycinamidine synthase subunit PurL.